The following is a 692-amino-acid chain: Phenoloxidase subunit 2 (692 aa).

A propeptide spanning residues 1–97 is cleaved from the precursor; that stretch reads MTDRVKSLQL…PRHQEMATEV (97 aa). 3 residues coordinate Cu cation: H213, H217, and H243. N-linked (GlcNAc...) asparagine glycosylation is found at N256, N295, and N309. E351 acts as the Proton acceptor in catalysis. 3 residues coordinate Cu cation: H366, H370, and H406. Residue N494 is glycosylated (N-linked (GlcNAc...) asparagine). 2 disulfide bridges follow: C583/C628 and C585/C635.

It belongs to the tyrosinase family. As to quaternary structure, heterodimer. Cu(2+) serves as cofactor.

The protein localises to the secreted. It carries out the reaction L-tyrosine + O2 = L-dopaquinone + H2O. It catalyses the reaction 2 L-dopa + O2 = 2 L-dopaquinone + 2 H2O. Its function is as follows. Copper-containing oxidase that functions in the formation of pigments such as melanins and other polyphenolic compounds. Catalyzes the rate-limiting conversions of tyrosine to DOPA, DOPA to DOPA-quinone and possibly 5,6 dihydroxyindole to indole-5'6 quinone. Binds to the surface of hemocytes and is involved in hemocyte melanization. Binds the A.niger cell wall component alpha-1,3-glucan, a fungal pathogen-associated molecular pattern (PAMP) that activates the host immune response. This is Phenoloxidase subunit 2 from Galleria mellonella (Greater wax moth).